We begin with the raw amino-acid sequence, 366 residues long: Terpene cyclase-like protein flvF (366 aa).

The protein belongs to the terpene synthase family. Homodimer.

The enzyme catalyses N,N-dimethyl-cadaverine + 2,6,9-trimethyl-13-oxatetracyclo[6.3.1.1(6,9).0(1,5)]tridecane carbocation = pre-flavunoidine + H(+). The protein operates within secondary metabolite biosynthesis; terpenoid biosynthesis. Its function is as follows. Terpene cyclase-like protein; part of the gene cluster that mediates the biosynthesis of flavunoidine, an alkaloidal terpenoid with a tetracyclic cage-like core connected to dimethylcadaverine via a C-N bond and acylated with 5,5-dimethyl-L-pipecolate. The tetracyclic core is synthesized by the terpene cyclase flvE and the cytochrome P450 monooxygenase flvD. The terpene cyclase flvE catalyzes the cyclization of farnesyl pyrophosphate (FPP) to form (1R,4R,5S)-(+)-acoradiene and the cytochrome P450 monooxygenase flvD is then responsible for oxidative conversion of (1R,4R,5S)-(+)-acoradiene into the tetracyclic cage present in the final product flavunoidine. In parallel, the N-methyltransferase flvH dimethylates L-lysine to give N,N-dimethyl-L-Lysin which is decarboxylated by flvG to afford dimethylcadaverine. The terpene cyclase-like protein flvF is the enzyme that attaches the dimethylcadaverine precusor at the C-7 of the tetracyclic cage to yield pre-flavunoidine. The cytochrome monooxygenase flvC hydroxylates the C-10 position of pre-flavunoidine whereas the NRPS flvI acylates the terpenoid core at the hydroxylated C-10 with dimethylpipecolate to yield final flavunoidine. The bifunctional enzyme flvA and the dehydrogenase flvB are responsible for the synthesis of the dimethylpipecolate precursor. The PLP-dependent lyase domain of flvA might use L-O-acetyl-homoserine and alpha-keto-isovalerate to form an intermediary ketone that can cyclize intramolecularly to yield an imine. The imine can be reduced by flvB to yield the 6-carboxylated pipecolate. The C-terminal alpha-KG-dependent oxygenase domain of flvA is then proposed to catalyze the decarboxylation to yield dimethylpipecolate. The polypeptide is Terpene cyclase-like protein flvF (Aspergillus flavus (strain ATCC 200026 / FGSC A1120 / IAM 13836 / NRRL 3357 / JCM 12722 / SRRC 167)).